The following is a 75-amino-acid chain: Transcription attenuation protein MtrB (75 aa).

The protein belongs to the MtrB family. Oligomer of 11 identical subunits arranged in doughnut-like structure.

In terms of biological role, required for transcription attenuation control in the trp operon. This trans-acting factor binds to trinucleotide repeats (GAG or UAG) located in the trp leader transcript causing transcription termination. Binds the leader RNA only in presence of L-tryptophan. The sequence is that of Transcription attenuation protein MtrB (mtrB) from Bacillus subtilis (strain 168).